The chain runs to 370 residues: 3-dehydroquinate synthase (370 aa).

NAD(+) contacts are provided by residues 112 to 116 (GVVGD), 136 to 137 (TS), lysine 149, lysine 158, and 176 to 179 (TLRT). Residues glutamate 191, histidine 254, and histidine 276 each coordinate Zn(2+).

The protein belongs to the sugar phosphate cyclases superfamily. Dehydroquinate synthase family. The cofactor is Co(2+). Requires Zn(2+) as cofactor. It depends on NAD(+) as a cofactor.

The protein resides in the cytoplasm. It catalyses the reaction 7-phospho-2-dehydro-3-deoxy-D-arabino-heptonate = 3-dehydroquinate + phosphate. It functions in the pathway metabolic intermediate biosynthesis; chorismate biosynthesis; chorismate from D-erythrose 4-phosphate and phosphoenolpyruvate: step 2/7. Catalyzes the conversion of 3-deoxy-D-arabino-heptulosonate 7-phosphate (DAHP) to dehydroquinate (DHQ). This chain is 3-dehydroquinate synthase, found in Xanthomonas campestris pv. campestris (strain 8004).